A 325-amino-acid chain; its full sequence is Protein FAM50B (325 aa).

At Ala-2 the chain carries N-acetylalanine. Disordered regions lie at residues Gln-92–Arg-111 and Arg-137–Glu-160.

It belongs to the FAM50 family. As to expression, widely expressed. Mostly abundant in testis and adult and fetal brain.

In Homo sapiens (Human), this protein is Protein FAM50B (FAM50B).